The chain runs to 951 residues: Coiled-coil domain-containing protein 15 (951 aa).

Coiled-coil stretches lie at residues 64–89 (LIEE…QVKY), 154–193 (DGIE…VIKK), 782–813 (MDIE…EQEC), and 839–874 (LAQL…IQEK).

As to quaternary structure, interacts with POC5, POC1B, CETN2 and FAM161A.

Its subcellular location is the cytoplasm. The protein localises to the cytoskeleton. It localises to the microtubule organizing center. It is found in the centrosome. The protein resides in the centriole. Its subcellular location is the centriolar satellite. In terms of biological role, plays an important role in primary cilium assembly, maintenance, and length regulation. Interacts with centriole inner scaffold proteins to promote proper centriole size and integrity and assembly of functional cilia. Required for the recruitment of both the inner scaffold protein POC1B and the distal SFI1/CETN2 complex to centrioles. In Homo sapiens (Human), this protein is Coiled-coil domain-containing protein 15 (CCDC15).